A 1604-amino-acid polypeptide reads, in one-letter code: Putative surface cell antigen sca2 (1604 aa).

The signal sequence occupies residues 1–33 (MSLQNSHSKKYVLTFFMSTCLLTSSFLSTSARA). Disordered regions lie at residues 324-354 (TTKP…RTKP), 554-603 (NVNN…SNPN), and 1183-1240 (QQEN…KSLL). The segment covering 554–564 (NVNNNSNKGQN) has biased composition (low complexity). Positions 568–587 (ILPPTPPLNGSMPPSPPPPL) are enriched in pro residues. Composition is skewed to basic and acidic residues over residues 1193–1213 (SSTK…KSDS) and 1227–1240 (SKND…KSLL). The Autotransporter domain occupies 1325 to 1604 (EASINRGVWI…QGLIKLKVNL (280 aa)).

It is found in the cell outer membrane. The chain is Putative surface cell antigen sca2 (sca2) from Rickettsia felis (strain ATCC VR-1525 / URRWXCal2) (Rickettsia azadi).